The sequence spans 730 residues: Phosphoribosylformylglycinamidine synthase subunit PurL (730 aa).

The active site involves histidine 44. ATP-binding residues include tyrosine 47 and lysine 86. Glutamate 88 contributes to the Mg(2+) binding site. Substrate is bound by residues serine 89–histidine 92 and arginine 111. The active-site Proton acceptor is the histidine 90. Aspartate 112 serves as a coordination point for Mg(2+). Position 235 (glutamine 235) interacts with substrate. Residue aspartate 263 participates in Mg(2+) binding. Position 307 to 309 (glutamate 307 to glutamine 309) interacts with substrate. ATP is bound by residues asparagine 489 and glycine 526. Position 527 (asparagine 527) interacts with Mg(2+). Serine 529 lines the substrate pocket.

This sequence belongs to the FGAMS family. Monomer. Part of the FGAM synthase complex composed of 1 PurL, 1 PurQ and 2 PurS subunits.

It localises to the cytoplasm. The enzyme catalyses N(2)-formyl-N(1)-(5-phospho-beta-D-ribosyl)glycinamide + L-glutamine + ATP + H2O = 2-formamido-N(1)-(5-O-phospho-beta-D-ribosyl)acetamidine + L-glutamate + ADP + phosphate + H(+). It functions in the pathway purine metabolism; IMP biosynthesis via de novo pathway; 5-amino-1-(5-phospho-D-ribosyl)imidazole from N(2)-formyl-N(1)-(5-phospho-D-ribosyl)glycinamide: step 1/2. Functionally, part of the phosphoribosylformylglycinamidine synthase complex involved in the purines biosynthetic pathway. Catalyzes the ATP-dependent conversion of formylglycinamide ribonucleotide (FGAR) and glutamine to yield formylglycinamidine ribonucleotide (FGAM) and glutamate. The FGAM synthase complex is composed of three subunits. PurQ produces an ammonia molecule by converting glutamine to glutamate. PurL transfers the ammonia molecule to FGAR to form FGAM in an ATP-dependent manner. PurS interacts with PurQ and PurL and is thought to assist in the transfer of the ammonia molecule from PurQ to PurL. The chain is Phosphoribosylformylglycinamidine synthase subunit PurL from Pelagibacter ubique (strain HTCC1062).